Consider the following 359-residue polypeptide: MKNTKIKIIITGGGSGGHVFVGLSIAEQLIKIGCEILWIGSSDRIESYLIPKSNIKIYKINVIGFNGNNIFLKLISLIKTAYSILKIKKLIKYYKPDIVLSIGGYVSFPGAIATWISKVPLIIHEQNSVPGLSNYILYKLTNCKILQAFPNTFPRAKVVGNPIRNAILKIKTPEKRFLGRFGPLRILVIGGSQGASILNLVIPDVAKYLPNKFHIWHQSGYSEYELVKSKYEKLFHHTEYKVFDFIKDISIAYEWADLIICRSGALTVSEISSIGIAALFVPYNHKDNHQYWNAKILEKIGAAEIINQKDFTKKKLIKLLSSWDRKKSLIMSQKSKNLSITNSAKKIIKEINNLIGLVK.

UDP-N-acetyl-alpha-D-glucosamine-binding positions include 15-17, asparagine 127, arginine 164, serine 192, isoleucine 246, 265-270, and glutamine 290; these read SGG and ALTVSE.

It belongs to the glycosyltransferase 28 family. MurG subfamily.

It localises to the cell membrane. It carries out the reaction di-trans,octa-cis-undecaprenyl diphospho-N-acetyl-alpha-D-muramoyl-L-alanyl-D-glutamyl-meso-2,6-diaminopimeloyl-D-alanyl-D-alanine + UDP-N-acetyl-alpha-D-glucosamine = di-trans,octa-cis-undecaprenyl diphospho-[N-acetyl-alpha-D-glucosaminyl-(1-&gt;4)]-N-acetyl-alpha-D-muramoyl-L-alanyl-D-glutamyl-meso-2,6-diaminopimeloyl-D-alanyl-D-alanine + UDP + H(+). Its pathway is cell wall biogenesis; peptidoglycan biosynthesis. Cell wall formation. Catalyzes the transfer of a GlcNAc subunit on undecaprenyl-pyrophosphoryl-MurNAc-pentapeptide (lipid intermediate I) to form undecaprenyl-pyrophosphoryl-MurNAc-(pentapeptide)GlcNAc (lipid intermediate II). This is UDP-N-acetylglucosamine--N-acetylmuramyl-(pentapeptide) pyrophosphoryl-undecaprenol N-acetylglucosamine transferase from Wigglesworthia glossinidia brevipalpis.